Consider the following 74-residue polypeptide: UPF0435 protein GK0418 (74 aa).

Belongs to the UPF0435 family.

This chain is UPF0435 protein GK0418, found in Geobacillus kaustophilus (strain HTA426).